The following is a 117-amino-acid chain: Ribonuclease P protein component (117 aa).

The protein belongs to the RnpA family. As to quaternary structure, consists of a catalytic RNA component (M1 or rnpB) and a protein subunit.

The catalysed reaction is Endonucleolytic cleavage of RNA, removing 5'-extranucleotides from tRNA precursor.. RNaseP catalyzes the removal of the 5'-leader sequence from pre-tRNA to produce the mature 5'-terminus. It can also cleave other RNA substrates such as 4.5S RNA. The protein component plays an auxiliary but essential role in vivo by binding to the 5'-leader sequence and broadening the substrate specificity of the ribozyme. This chain is Ribonuclease P protein component, found in Lactococcus lactis subsp. lactis (strain IL1403) (Streptococcus lactis).